The following is a 220-amino-acid chain: Thymidylate kinase (220 aa).

Position 10–17 (10–17) interacts with ATP; the sequence is GIDGCGKS.

It belongs to the thymidylate kinase family.

The enzyme catalyses dTMP + ATP = dTDP + ADP. Phosphorylation of dTMP to form dTDP in both de novo and salvage pathways of dTTP synthesis. The sequence is that of Thymidylate kinase from Prochlorococcus marinus (strain SARG / CCMP1375 / SS120).